Consider the following 451-residue polypeptide: uncharacterized protein (451 aa).

An N-terminal signal peptide occupies residues 1–18; that stretch reads MRTRITLALAVLLLLLAG. Residue Cys-19 is the site of N-palmitoyl cysteine attachment. Residue Cys-19 is the site of S-diacylglycerol cysteine attachment. A disordered region spans residues 424–451; that stretch reads TSADPPPGVPRAGKRNIRDATSRLPSTP.

Its subcellular location is the cell membrane. May participate in oleandomycin glycosylation and secretion during antibiotic production. This is an uncharacterized protein from Streptomyces antibioticus.